A 116-amino-acid polypeptide reads, in one-letter code: Large ribosomal subunit protein bL17 (116 aa).

The protein belongs to the bacterial ribosomal protein bL17 family. Part of the 50S ribosomal subunit. Contacts protein L32.

This Prochlorococcus marinus (strain MIT 9215) protein is Large ribosomal subunit protein bL17.